Here is a 206-residue protein sequence, read N- to C-terminus: Thiamine-phosphate synthase (206 aa).

4-amino-2-methyl-5-(diphosphooxymethyl)pyrimidine-binding positions include 38–42 (QLREK) and N70. Mg(2+)-binding residues include D71 and D90. Residue T109 coordinates 4-amino-2-methyl-5-(diphosphooxymethyl)pyrimidine. Residue 135-137 (TST) coordinates 2-[(2R,5Z)-2-carboxy-4-methylthiazol-5(2H)-ylidene]ethyl phosphate. A 4-amino-2-methyl-5-(diphosphooxymethyl)pyrimidine-binding site is contributed by K138. 2-[(2R,5Z)-2-carboxy-4-methylthiazol-5(2H)-ylidene]ethyl phosphate contacts are provided by residues G165 and 185–186 (VS).

It belongs to the thiamine-phosphate synthase family. Mg(2+) is required as a cofactor.

It catalyses the reaction 2-[(2R,5Z)-2-carboxy-4-methylthiazol-5(2H)-ylidene]ethyl phosphate + 4-amino-2-methyl-5-(diphosphooxymethyl)pyrimidine + 2 H(+) = thiamine phosphate + CO2 + diphosphate. The catalysed reaction is 2-(2-carboxy-4-methylthiazol-5-yl)ethyl phosphate + 4-amino-2-methyl-5-(diphosphooxymethyl)pyrimidine + 2 H(+) = thiamine phosphate + CO2 + diphosphate. It carries out the reaction 4-methyl-5-(2-phosphooxyethyl)-thiazole + 4-amino-2-methyl-5-(diphosphooxymethyl)pyrimidine + H(+) = thiamine phosphate + diphosphate. Its pathway is cofactor biosynthesis; thiamine diphosphate biosynthesis; thiamine phosphate from 4-amino-2-methyl-5-diphosphomethylpyrimidine and 4-methyl-5-(2-phosphoethyl)-thiazole: step 1/1. Its function is as follows. Condenses 4-methyl-5-(beta-hydroxyethyl)thiazole monophosphate (THZ-P) and 2-methyl-4-amino-5-hydroxymethyl pyrimidine pyrophosphate (HMP-PP) to form thiamine monophosphate (TMP). The polypeptide is Thiamine-phosphate synthase (Fusobacterium nucleatum subsp. nucleatum (strain ATCC 25586 / DSM 15643 / BCRC 10681 / CIP 101130 / JCM 8532 / KCTC 2640 / LMG 13131 / VPI 4355)).